The chain runs to 460 residues: Serine--tRNA ligase (460 aa).

Position 255–257 (Thr255–Glu257) interacts with L-serine. ATP is bound by residues Arg286–Glu288 and Val302. Glu309 contacts L-serine. Glu373–Ser376 contributes to the ATP binding site. Thr409 lines the L-serine pocket.

This sequence belongs to the class-II aminoacyl-tRNA synthetase family. Type-1 seryl-tRNA synthetase subfamily. As to quaternary structure, homodimer. The tRNA molecule binds across the dimer.

It localises to the cytoplasm. It catalyses the reaction tRNA(Ser) + L-serine + ATP = L-seryl-tRNA(Ser) + AMP + diphosphate + H(+). The catalysed reaction is tRNA(Sec) + L-serine + ATP = L-seryl-tRNA(Sec) + AMP + diphosphate + H(+). It functions in the pathway aminoacyl-tRNA biosynthesis; selenocysteinyl-tRNA(Sec) biosynthesis; L-seryl-tRNA(Sec) from L-serine and tRNA(Sec): step 1/1. In terms of biological role, catalyzes the attachment of serine to tRNA(Ser). Is also able to aminoacylate tRNA(Sec) with serine, to form the misacylated tRNA L-seryl-tRNA(Sec), which will be further converted into selenocysteinyl-tRNA(Sec). This chain is Serine--tRNA ligase, found in Aeropyrum pernix (strain ATCC 700893 / DSM 11879 / JCM 9820 / NBRC 100138 / K1).